A 141-amino-acid polypeptide reads, in one-letter code: Hemoglobin subunit alpha (141 aa).

Positions 1–141 constitute a Globin domain; that stretch reads VLSPADKTNV…VSTVLTSKYR (141 aa). The residue at position 3 (Ser3) is a Phosphoserine. Lys7 is modified (N6-succinyllysine). Thr8 bears the Phosphothreonine mark. Lys11 is modified (N6-succinyllysine). N6-acetyllysine; alternate is present on Lys16. At Lys16 the chain carries N6-succinyllysine; alternate. Phosphotyrosine is present on Tyr24. Ser35 carries the post-translational modification Phosphoserine. Residue Lys40 is modified to N6-succinyllysine. Phosphoserine is present on Ser49. Residue His58 coordinates O2. Residue His87 coordinates heme b. Ser102 carries the post-translational modification Phosphoserine. Thr108 is modified (phosphothreonine). Phosphoserine occurs at positions 124 and 131. Thr134 and Thr137 each carry phosphothreonine. The residue at position 138 (Ser138) is a Phosphoserine.

This sequence belongs to the globin family. Heterotetramer of two alpha chains and two beta chains. In terms of tissue distribution, red blood cells.

Its function is as follows. Involved in oxygen transport from the lung to the various peripheral tissues. The chain is Hemoglobin subunit alpha from Otospermophilus beecheyi (California ground squirrel).